The following is a 404-amino-acid chain: Imidazolonepropionase (404 aa).

Fe(3+) is bound by residues His-73 and His-75. Zn(2+) contacts are provided by His-73 and His-75. 4-imidazolone-5-propanoate is bound by residues Arg-82, Tyr-145, and His-178. Tyr-145 is a binding site for N-formimidoyl-L-glutamate. Residue His-243 participates in Fe(3+) binding. A Zn(2+)-binding site is contributed by His-243. A 4-imidazolone-5-propanoate-binding site is contributed by Gln-246. Position 318 (Asp-318) interacts with Fe(3+). Residue Asp-318 participates in Zn(2+) binding. The N-formimidoyl-L-glutamate site is built by Asn-320 and Gly-322. A 4-imidazolone-5-propanoate-binding site is contributed by Ser-323.

Belongs to the metallo-dependent hydrolases superfamily. HutI family. Requires Zn(2+) as cofactor. The cofactor is Fe(3+).

Its subcellular location is the cytoplasm. It catalyses the reaction 4-imidazolone-5-propanoate + H2O = N-formimidoyl-L-glutamate. It participates in amino-acid degradation; L-histidine degradation into L-glutamate; N-formimidoyl-L-glutamate from L-histidine: step 3/3. Catalyzes the hydrolytic cleavage of the carbon-nitrogen bond in imidazolone-5-propanoate to yield N-formimidoyl-L-glutamate. It is the third step in the universal histidine degradation pathway. This chain is Imidazolonepropionase, found in Bradyrhizobium diazoefficiens (strain JCM 10833 / BCRC 13528 / IAM 13628 / NBRC 14792 / USDA 110).